Consider the following 408-residue polypeptide: Glutamate N-acetyltransferase (408 aa).

Residues threonine 150, lysine 176, threonine 189, glutamate 271, asparagine 403, and threonine 408 each contribute to the substrate site. Catalysis depends on threonine 189, which acts as the Nucleophile.

The protein belongs to the ArgJ family. As to quaternary structure, heterotetramer of two alpha and two beta chains.

Its subcellular location is the cytoplasm. The enzyme catalyses N(2)-acetyl-L-ornithine + L-glutamate = N-acetyl-L-glutamate + L-ornithine. It functions in the pathway amino-acid biosynthesis; L-arginine biosynthesis; L-ornithine and N-acetyl-L-glutamate from L-glutamate and N(2)-acetyl-L-ornithine (cyclic): step 1/1. In terms of biological role, catalyzes the transfer of the acetyl group from N(2)-acetylornithine to glutamate, forming N-acetylglutamate and L-ornithine. This chain is Glutamate N-acetyltransferase, found in Methanococcus maripaludis (strain C7 / ATCC BAA-1331).